The sequence spans 2724 residues: Eukaryotic translation initiation factor 2-alpha kinase 2 (2724 aa).

Residues 1-24 (MLNMVDQKKGINNGSSTGVINNIN) are Cytoplasmic-facing. A helical transmembrane segment spans residues 25 to 45 (GKIKNEFIFMYLIAAGGFSCV). The Extracellular segment spans residues 46–673 (YKIKKKKSNK…KFYIKRHNQK (628 aa)). Residues 112 to 153 (KRERRGRRKEQQREQMGDKRREKRQQQRREKRKEQNTNTKKR) form a disordered region. Residues 120–146 (KEQQREQMGDKRREKRQQQRREKRKEQ) are compositionally biased toward basic and acidic residues. A helical membrane pass occupies residues 674-694 (TYFFENIIFYHYIIMLFLDIE). Residues 695-718 (KYKNKFVSLFQYNLYRKLLKISKR) are Cytoplasmic-facing. Residues 719-739 (IVLMLHRIETNVICIFLLKHF) traverse the membrane as a helical segment. Residues 740 to 800 (EDYFIRKGIH…KKNIFNFFIE (61 aa)) are Extracellular-facing. Residues 801–821 (LFLNNIQINIFKKFEILYLII) form a helical membrane-spanning segment. Topologically, residues 822-832 (YFYNYFEKSKQ) are cytoplasmic. Residues 833–853 (FDIEGIGDIIYVWLSLINLFY) traverse the membrane as a helical segment. The Extracellular segment spans residues 854–876 (DDKGKCIKILSKIFAKLNKKLYY). The helical transmembrane segment at 877–897 (VYWGKLYIIMNWTTIVDTIFI) threads the bilayer. Residues 898–908 (RNVLSINREGN) lie on the Cytoplasmic side of the membrane. The helical transmembrane segment at 909-929 (YYWVIIVLKMINYFVNVAYTL) threads the bilayer. Topologically, residues 930–996 (TRMDIFFIKV…KKNYDIYTKY (67 aa)) are extracellular. A helical transmembrane segment spans residues 997-1017 (AILFIYCFIIQAYYFDTLFNI). The Cytoplasmic portion of the chain corresponds to 1018 to 2724 (RSLESNEIAN…GDIFLPDKCP (1707 aa)). Position 2029 (Lys-2029) interacts with ATP. The region spanning 2084–2719 (KHYFTKCGIL…KIISAGDIFL (636 aa)) is the Protein kinase domain. Residues 2120 to 2155 (INTLNEENQNMFCKNKEKKEENYKKIDTNISQFSEK) are a coiled coil. Catalysis depends on Asp-2229, which acts as the Proton acceptor. The interval 2479-2507 (EKMDKNKIAAQKKKKKKENKHPIGRRSTN) is disordered. Basic residues predominate over residues 2488 to 2502 (AQKKKKKKENKHPIG).

The protein belongs to the protein kinase superfamily. Ser/Thr protein kinase family. GCN2 subfamily. In terms of processing, auto-phosphorylated.

The protein resides in the membrane. It carries out the reaction L-seryl-[protein] + ATP = O-phospho-L-seryl-[protein] + ADP + H(+). The catalysed reaction is L-threonyl-[protein] + ATP = O-phospho-L-threonyl-[protein] + ADP + H(+). Phosphorylates translation factor eIF2alpha in salivary gland sporozoites during dormancy, which leads to an inhibition of protein translation and accumulation of stalled mRNAs into granules. The polypeptide is Eukaryotic translation initiation factor 2-alpha kinase 2 (Plasmodium berghei (strain Anka)).